The primary structure comprises 249 residues: uncharacterized protein (249 aa).

Position 7-14 (7-14 (GKGGCGKS)) interacts with ATP.

This is an uncharacterized protein from Methanocaldococcus jannaschii (strain ATCC 43067 / DSM 2661 / JAL-1 / JCM 10045 / NBRC 100440) (Methanococcus jannaschii).